We begin with the raw amino-acid sequence, 998 residues long: Bifunctional glutamine synthetase adenylyltransferase/adenylyl-removing enzyme (998 aa).

Positions 1–487 (MVVTKPATQR…LHAKLFYQPL (487 aa)) are adenylyl removase. Residues 492–998 (GPAGLEIRHG…KAVVRKVFGS (507 aa)) form an adenylyl transferase region.

This sequence belongs to the GlnE family. Mg(2+) is required as a cofactor.

The catalysed reaction is [glutamine synthetase]-O(4)-(5'-adenylyl)-L-tyrosine + phosphate = [glutamine synthetase]-L-tyrosine + ADP. It catalyses the reaction [glutamine synthetase]-L-tyrosine + ATP = [glutamine synthetase]-O(4)-(5'-adenylyl)-L-tyrosine + diphosphate. Involved in the regulation of glutamine synthetase GlnA, a key enzyme in the process to assimilate ammonia. When cellular nitrogen levels are high, the C-terminal adenylyl transferase (AT) inactivates GlnA by covalent transfer of an adenylyl group from ATP to specific tyrosine residue of GlnA, thus reducing its activity. Conversely, when nitrogen levels are low, the N-terminal adenylyl removase (AR) activates GlnA by removing the adenylyl group by phosphorolysis, increasing its activity. The regulatory region of GlnE binds the signal transduction protein PII (GlnB) which indicates the nitrogen status of the cell. This is Bifunctional glutamine synthetase adenylyltransferase/adenylyl-removing enzyme from Mycobacterium avium (strain 104).